Here is a 213-residue protein sequence, read N- to C-terminus: Phosphatidylserine decarboxylase proenzyme (213 aa).

The active-site Schiff-base intermediate with substrate; via pyruvic acid is Ser-182. Residue Ser-182 is modified to Pyruvic acid (Ser); by autocatalysis.

This sequence belongs to the phosphatidylserine decarboxylase family. PSD-A subfamily. As to quaternary structure, heterodimer of a large membrane-associated beta subunit and a small pyruvoyl-containing alpha subunit. The cofactor is pyruvate. Is synthesized initially as an inactive proenzyme. Formation of the active enzyme involves a self-maturation process in which the active site pyruvoyl group is generated from an internal serine residue via an autocatalytic post-translational modification. Two non-identical subunits are generated from the proenzyme in this reaction, and the pyruvate is formed at the N-terminus of the alpha chain, which is derived from the carboxyl end of the proenzyme. The post-translation cleavage follows an unusual pathway, termed non-hydrolytic serinolysis, in which the side chain hydroxyl group of the serine supplies its oxygen atom to form the C-terminus of the beta chain, while the remainder of the serine residue undergoes an oxidative deamination to produce ammonia and the pyruvoyl prosthetic group on the alpha chain.

The protein localises to the cell membrane. The enzyme catalyses a 1,2-diacyl-sn-glycero-3-phospho-L-serine + H(+) = a 1,2-diacyl-sn-glycero-3-phosphoethanolamine + CO2. It participates in phospholipid metabolism; phosphatidylethanolamine biosynthesis; phosphatidylethanolamine from CDP-diacylglycerol: step 2/2. In terms of biological role, catalyzes the formation of phosphatidylethanolamine (PtdEtn) from phosphatidylserine (PtdSer). The polypeptide is Phosphatidylserine decarboxylase proenzyme (Geotalea uraniireducens (strain Rf4) (Geobacter uraniireducens)).